We begin with the raw amino-acid sequence, 335 residues long: Cathepsin B (335 aa).

An N-terminal signal peptide occupies residues 1–17 (MWRLLATLSCLVLLTSA). Residues 18-79 (RESLHFQPLS…QRAAFAADMI (62 aa)) constitute a propeptide, activation peptide. Cystine bridges form between Cys-93/Cys-122, Cys-105/Cys-150, Cys-141/Cys-207, Cys-142/Cys-146, Cys-179/Cys-211, and Cys-187/Cys-198. Cys-108 is a catalytic residue. Asn-192 is a glycosylation site (N-linked (GlcNAc...) asparagine). Lys-220 is modified (N6-acetyllysine). Cys-227 and Cys-331 are oxidised to a cystine. Catalysis depends on residues His-278 and Asn-298. Positions 333–335 (PHF) are excised as a propeptide.

The protein belongs to the peptidase C1 family. As to quaternary structure, dimer of a heavy chain and a light chain cross-linked by a disulfide bond. Interacts with SRPX2. Directly interacts with SHKBP1. As to expression, expressed in heart (at protein level).

The protein resides in the lysosome. Its subcellular location is the melanosome. The protein localises to the secreted. It localises to the extracellular space. It is found in the apical cell membrane. The catalysed reaction is Hydrolysis of proteins with broad specificity for peptide bonds. Preferentially cleaves -Arg-Arg-|-Xaa bonds in small molecule substrates (thus differing from cathepsin L). In addition to being an endopeptidase, shows peptidyl-dipeptidase activity, liberating C-terminal dipeptides.. Functionally, thiol protease which is believed to participate in intracellular degradation and turnover of proteins. Cleaves matrix extracellular phosphoglycoprotein MEPE. Involved in the solubilization of cross-linked TG/thyroglobulin in the thyroid follicle lumen. Has also been implicated in tumor invasion and metastasis. This Sus scrofa (Pig) protein is Cathepsin B (CTSB).